A 179-amino-acid polypeptide reads, in one-letter code: Translation initiation factor IF-3 (179 aa).

This sequence belongs to the IF-3 family. Monomer.

Its subcellular location is the cytoplasm. In terms of biological role, IF-3 binds to the 30S ribosomal subunit and shifts the equilibrium between 70S ribosomes and their 50S and 30S subunits in favor of the free subunits, thus enhancing the availability of 30S subunits on which protein synthesis initiation begins. This chain is Translation initiation factor IF-3, found in Buchnera aphidicola subsp. Schizaphis graminum (strain Sg).